A 525-amino-acid polypeptide reads, in one-letter code: MNTFPWLTTIILLPIVAALFIPIIPDKDGKTVRWYSLAVGLVDFALIVYAFYSGFDLSEPGLQLVESYTWLPQIDLKWSVGADGLSMPLIILTGFITTLATMAAWPVTLKPKLFYFLMLLMYGGQIAVFAVQDILLFFLVWELELVPVYLILSIWGGKKRLYAATKFILYTAGGSLFILLAGLTLAFYGDVNTFDMSAIAAKDIPVNLQLLLYAGFLIAYGVKLPIFPLHTWLPDAHGEATAPAHMLLAGILLKMGGYALLRMNVGMLPDAHAVFAPVLVILGVVNIIYAAFTSFAQRNLKRKIAYSSISHMGFVLIGLASFTDLGMSGAMLQMISHGLIGASLFFMVGATYDRTHTLMLDEMGGIGQKMKKGFAMWTACSLASLALPGMSGFVAELMVFVGFATSDAYNLVFRTIVVVLMGVGVILTPIYLLSMLREMLYGPENEELVNHTNLVDVEPREVFIIGCLLVPIIGIGFYPKLITQIYDPTINQLVQTARRSVPSLVQQANLSPLEVTALRPPTIGF.

The next 14 membrane-spanning stretches (helical) occupy residues 4 to 24, 37 to 57, 89 to 109, 111 to 131, 134 to 154, 167 to 187, 210 to 230, 241 to 261, 273 to 293, 309 to 329, 330 to 350, 385 to 405, 416 to 436, and 462 to 482; these read FPWL…IPII, LAVG…GFDL, LIIL…PVTL, PKLF…VFAV, ILLF…ILSI, FILY…TLAF, LLLY…FPLH, TAPA…YALL, AVFA…AAFT, ISHM…GMSG, AMLQ…MVGA, LALP…GFAT, IVVV…LSML, and VFII…PKLI.

This sequence belongs to the complex I subunit 4 family.

The protein resides in the cellular thylakoid membrane. The catalysed reaction is a plastoquinone + NADH + (n+1) H(+)(in) = a plastoquinol + NAD(+) + n H(+)(out). It catalyses the reaction a plastoquinone + NADPH + (n+1) H(+)(in) = a plastoquinol + NADP(+) + n H(+)(out). Functionally, NDH-1 shuttles electrons from NAD(P)H, via FMN and iron-sulfur (Fe-S) centers, to quinones in the respiratory chain. The immediate electron acceptor for the enzyme in this species is believed to be plastoquinone. Couples the redox reaction to proton translocation (for every two electrons transferred, four hydrogen ions are translocated across the cytoplasmic membrane), and thus conserves the redox energy in a proton gradient. The protein is NAD(P)H-quinone oxidoreductase chain 4-1 (ndhD1) of Synechocystis sp. (strain ATCC 27184 / PCC 6803 / Kazusa).